We begin with the raw amino-acid sequence, 312 residues long: Glyoxylate/hydroxypyruvate reductase A (312 aa).

Residue Arg227 is part of the active site. Catalysis depends on His275, which acts as the Proton donor.

The protein belongs to the D-isomer specific 2-hydroxyacid dehydrogenase family. GhrA subfamily.

Its subcellular location is the cytoplasm. It catalyses the reaction glycolate + NADP(+) = glyoxylate + NADPH + H(+). The enzyme catalyses (R)-glycerate + NAD(+) = 3-hydroxypyruvate + NADH + H(+). The catalysed reaction is (R)-glycerate + NADP(+) = 3-hydroxypyruvate + NADPH + H(+). In terms of biological role, catalyzes the NADPH-dependent reduction of glyoxylate and hydroxypyruvate into glycolate and glycerate, respectively. The sequence is that of Glyoxylate/hydroxypyruvate reductase A from Escherichia coli O157:H7.